The chain runs to 144 residues: D-aminoacyl-tRNA deacylase (144 aa).

The short motif at 136-137 is the Gly-cisPro motif, important for rejection of L-amino acids element; it reads GP.

Belongs to the DTD family. In terms of assembly, homodimer.

Its subcellular location is the cytoplasm. It carries out the reaction glycyl-tRNA(Ala) + H2O = tRNA(Ala) + glycine + H(+). The catalysed reaction is a D-aminoacyl-tRNA + H2O = a tRNA + a D-alpha-amino acid + H(+). An aminoacyl-tRNA editing enzyme that deacylates mischarged D-aminoacyl-tRNAs. Also deacylates mischarged glycyl-tRNA(Ala), protecting cells against glycine mischarging by AlaRS. Acts via tRNA-based rather than protein-based catalysis; rejects L-amino acids rather than detecting D-amino acids in the active site. By recycling D-aminoacyl-tRNA to D-amino acids and free tRNA molecules, this enzyme counteracts the toxicity associated with the formation of D-aminoacyl-tRNA entities in vivo and helps enforce protein L-homochirality. The chain is D-aminoacyl-tRNA deacylase from Vibrio cholerae serotype O1 (strain ATCC 39541 / Classical Ogawa 395 / O395).